Reading from the N-terminus, the 302-residue chain is Protein translocase subunit SecF (302 aa).

6 consecutive transmembrane segments (helical) span residues 12–32 (FFIYLSIALILFSVIVIFVKG), 138–158 (YAWYAVIISLIVLLAYITIRF), 166–186 (AILALAHDVIITLGFYSLFGI), 190–210 (LTAIAAFLTLAGYSLNDTIVV), 249–269 (FLVVFMMFLLGGRSIASFAFG), and 272–292 (VGVIIGTYSSLYIASPIVIGM).

The protein belongs to the SecD/SecF family. SecF subfamily. In terms of assembly, forms a complex with SecD. Part of the essential Sec protein translocation apparatus which comprises SecA, SecYEG and auxiliary proteins SecDF. Other proteins may also be involved.

Its subcellular location is the cell inner membrane. Its function is as follows. Part of the Sec protein translocase complex. Interacts with the SecYEG preprotein conducting channel. SecDF uses the proton motive force (PMF) to complete protein translocation after the ATP-dependent function of SecA. The protein is Protein translocase subunit SecF of Petrotoga mobilis (strain DSM 10674 / SJ95).